The chain runs to 373 residues: 3 beta-hydroxysteroid dehydrogenase/Delta 5--&gt;4-isomerase type 6 (373 aa).

Residue Tyr155 is the Proton acceptor of the active site. Lys159 is an NAD(+) binding site. A helical membrane pass occupies residues 288–308; that stretch reads VPLLYWLAFMLETVSFLLSPI.

The protein belongs to the 3-beta-HSD family. Expressed in skin and testis.

Its subcellular location is the endoplasmic reticulum membrane. It is found in the mitochondrion membrane. The catalysed reaction is a 3beta-hydroxy-Delta(5)-steroid + NAD(+) = a 3-oxo-Delta(5)-steroid + NADH + H(+). It carries out the reaction a 3-oxo-Delta(5)-steroid = a 3-oxo-Delta(4)-steroid. Its pathway is lipid metabolism; steroid biosynthesis. 3-beta-HSD is a bifunctional enzyme, that catalyzes the oxidative conversion of Delta(5)-ene-3-beta-hydroxy steroid, and the oxidative conversion of ketosteroids. The 3-beta-HSD enzymatic system plays a crucial role in the biosynthesis of all classes of hormonal steroids. May be involved in local production of progesterone. The polypeptide is 3 beta-hydroxysteroid dehydrogenase/Delta 5--&gt;4-isomerase type 6 (Hsd3b6) (Mus musculus (Mouse)).